The primary structure comprises 148 residues: Large ribosomal subunit protein bL9 (148 aa).

It belongs to the bacterial ribosomal protein bL9 family.

Its function is as follows. Binds to the 23S rRNA. This Thermobifida fusca (strain YX) protein is Large ribosomal subunit protein bL9.